The following is a 491-amino-acid chain: Putative ABC transporter ATP-binding protein TDE_0906 (491 aa).

ABC transporter domains follow at residues 2 to 241 (INLN…KQGL) and 267 to 491 (LTLH…KERL). ATP-binding positions include 36-43 (GKSGCGKT) and 300-307 (GKNGCGKT).

Belongs to the ABC transporter superfamily.

Its subcellular location is the cell inner membrane. Functionally, probably part of an ABC transporter complex. Responsible for energy coupling to the transport system. In Treponema denticola (strain ATCC 35405 / DSM 14222 / CIP 103919 / JCM 8153 / KCTC 15104), this protein is Putative ABC transporter ATP-binding protein TDE_0906.